Here is a 201-residue protein sequence, read N- to C-terminus: Cytochrome c oxidase subunit 3 (201 aa).

4 consecutive transmembrane segments (helical) span residues 25 to 45 (VLGL…LFAA), 65 to 85 (LFVP…IHYG), 100 to 120 (WYWI…YEYL), and 137 to 157 (VMTG…LGVI).

Belongs to the cytochrome c oxidase subunit 3 family.

It localises to the cell membrane. The catalysed reaction is 4 Fe(II)-[cytochrome c] + O2 + 8 H(+)(in) = 4 Fe(III)-[cytochrome c] + 2 H2O + 4 H(+)(out). In Thermostichus vulcanus (Synechococcus vulcanus), this protein is Cytochrome c oxidase subunit 3 (ctaE).